Reading from the N-terminus, the 147-residue chain is UPF0306 protein YhbP (147 aa).

It belongs to the UPF0306 family.

In Shigella sonnei (strain Ss046), this protein is UPF0306 protein YhbP.